The primary structure comprises 382 residues: 8-amino-7-oxononanoate synthase (382 aa).

Substrate is bound at residue Arg-26. 104–105 (GY) provides a ligand contact to pyridoxal 5'-phosphate. His-129 is a substrate binding site. Residues Ser-175, 200 to 203 (DEAH), and 232 to 235 (TLSK) each bind pyridoxal 5'-phosphate. At Lys-235 the chain carries N6-(pyridoxal phosphate)lysine. Thr-345 is a binding site for substrate.

The protein belongs to the class-II pyridoxal-phosphate-dependent aminotransferase family. BioF subfamily. As to quaternary structure, homodimer. It depends on pyridoxal 5'-phosphate as a cofactor.

It carries out the reaction 6-carboxyhexanoyl-[ACP] + L-alanine + H(+) = (8S)-8-amino-7-oxononanoate + holo-[ACP] + CO2. Its pathway is cofactor biosynthesis; biotin biosynthesis. In terms of biological role, catalyzes the decarboxylative condensation of pimeloyl-[acyl-carrier protein] and L-alanine to produce 8-amino-7-oxononanoate (AON), [acyl-carrier protein], and carbon dioxide. The protein is 8-amino-7-oxononanoate synthase of Mycobacterium sp. (strain JLS).